The primary structure comprises 659 residues: Pseudouridylate synthase 7 homolog (659 aa).

Met1 is subject to N-acetylmethionine. Composition is skewed to polar residues over residues 1 to 10 (MEMTEMTSVS) and 39 to 54 (CPTTGQDGIENSSLPS). Residues 1–99 (MEMTEMTSVS…EEEEEEAESF (99 aa)) form a disordered region. Phosphoserine is present on Ser10. A compositionally biased stretch (acidic residues) spans 75-98 (PSEEEEEEDGLSEEEEEEEEEAES). Ser125 bears the Phosphoserine mark. Asp292 functions as the Nucleophile in the catalytic mechanism. The TRUD domain occupies 368-578 (GFINYYGMQR…SGAYRKIIIR (211 aa)).

This sequence belongs to the pseudouridine synthase TruD family. Interacts with SIRT1.

The protein resides in the nucleus. It catalyses the reaction a uridine in tRNA = a pseudouridine in tRNA. It carries out the reaction uridine(13) in tRNA = pseudouridine(13) in tRNA. The enzyme catalyses a uridine in mRNA = a pseudouridine in mRNA. Pseudouridylate synthase that catalyzes pseudouridylation of RNAs. Acts as a regulator of protein synthesis in embryonic stem cells by mediating pseudouridylation of RNA fragments derived from tRNAs (tRFs): pseudouridylated tRFs inhibit translation by targeting the translation initiation complex. Also catalyzes pseudouridylation of mRNAs: mediates pseudouridylation of mRNAs with the consensus sequence 5'-UGUAG-3'. Acts as a regulator of pre-mRNA splicing by mediating pseudouridylation of pre-mRNAs at locations associated with alternatively spliced regions. Pseudouridylation of pre-mRNAs near splice sites directly regulates mRNA splicing and mRNA 3'-end processing. In addition to mRNAs and tRNAs, binds other types of RNAs, such as snRNAs, Y RNAs and vault RNAs, suggesting that it can catalyze pseudouridylation of many RNA types. This Bos taurus (Bovine) protein is Pseudouridylate synthase 7 homolog.